The chain runs to 226 residues: Lipoprotein-releasing system ATP-binding protein LolD (226 aa).

The ABC transporter domain occupies 6–226 (LKLDNIRRAF…KMSEGLLVEV (221 aa)). 42 to 49 (GPSGAGKS) provides a ligand contact to ATP.

The protein belongs to the ABC transporter superfamily. Lipoprotein translocase (TC 3.A.1.125) family. The complex is composed of two ATP-binding proteins (LolD) and two transmembrane proteins (LolC and LolE).

Its subcellular location is the cell inner membrane. Part of the ABC transporter complex LolCDE involved in the translocation of mature outer membrane-directed lipoproteins, from the inner membrane to the periplasmic chaperone, LolA. Responsible for the formation of the LolA-lipoprotein complex in an ATP-dependent manner. The sequence is that of Lipoprotein-releasing system ATP-binding protein LolD from Paramagnetospirillum magneticum (strain ATCC 700264 / AMB-1) (Magnetospirillum magneticum).